The chain runs to 483 residues: Keratin, type II cytoskeletal 8 (483 aa).

Positions 1–25 are enriched in polar residues; it reads MSVRVTQKSYKMSTSGPRAFSSRSF. A disordered region spans residues 1-43; the sequence is MSVRVTQKSYKMSTSGPRAFSSRSFTSGPGARISSSSFSRVGS. Positions 1–90 are head; it reads MSVRVTQKSY…DPNIQAVRTQ (90 aa). Phosphoserine; by PKC/PRKCE is present on S9. K11 participates in a covalent cross-link: Glycyl lysine isopeptide (Lys-Gly) (interchain with G-Cter in SUMO2). Phosphoserine is present on residues S13, S15, S21, and S22. Omega-N-methylarginine is present on R23. Residue S24 is modified to Phosphoserine; by PKC/PRKCE. S24 carries the post-translational modification Phosphoserine. T26 is modified (phosphothreonine). Over residues 26–43 the composition is skewed to low complexity; sequence TSGPGARISSSSFSRVGS. A Phosphoserine modification is found at S27. R32 is modified (omega-N-methylarginine). Phosphoserine occurs at positions 34, 37, and 39. Position 40 is an omega-N-methylarginine (R40). S43, S44, and S47 each carry phosphoserine. An Asymmetric dimethylarginine; alternate modification is found at R49. R49 is subject to Omega-N-methylarginine; alternate. Position 51 is a phosphoserine (S51). A coil 1A region spans residues 91 to 126; sequence EKEQIKTLNNKFASFIDKVRFLEQQNKMLETKWSLL. Residues 91-402 form the IF rod domain; it reads EKEQIKTLNN…KLLEGEESRL (312 aa). At K101 the chain carries N6-malonyllysine. Glycyl lysine isopeptide (Lys-Gly) (interchain with G-Cter in SUMO2) cross-links involve residues K122 and K130. Residues 127–143 form a linker 1 region; it reads QQQKTSRSNMDNMFESY. Residues 144 to 235 form a coil 1B region; it reads INNLRRQLEA…QIHEEEIREL (92 aa). Residue K197 forms a Glycyl lysine isopeptide (Lys-Gly) (interchain with G-Cter in SUMO1); alternate linkage. K197 is covalently cross-linked (Glycyl lysine isopeptide (Lys-Gly) (interchain with G-Cter in SUMO2); alternate). Residue K207 is modified to N6-acetyllysine. A linker 12 region spans residues 236–259; sequence QSQISDTSVVLSMDNSRSLDMDSI. A phosphoserine mark is found at S253, S258, and S274. The coil 2 stretch occupies residues 260 to 398; that stretch reads IAEVRAQYEE…ATYRKLLEGE (139 aa). A necessary for interaction with PNN region spans residues 261–382; it reads AEVRAQYEEI…EYQELMNVKL (122 aa). A Glycyl lysine isopeptide (Lys-Gly) (interchain with G-Cter in SUMO2) cross-link involves residue K285. K295 is covalently cross-linked (Glycyl lysine isopeptide (Lys-Gly) (interchain with G-Cter in SUMO2); alternate). N6-acetyllysine; alternate is present on K295. Residue K304 forms a Glycyl lysine isopeptide (Lys-Gly) (interchain with G-Cter in SUMO2) linkage. Residue K325 forms a Glycyl lysine isopeptide (Lys-Gly) (interchain with G-Cter in SUMO2); alternate linkage. At K325 the chain carries N6-acetyllysine; alternate. K393 participates in a covalent cross-link: Glycyl lysine isopeptide (Lys-Gly) (interchain with G-Cter in SUMO2). Residues 399–483 are tail; the sequence is ESRLESGMQN…VSESSDIMSK (85 aa). S400, S404, S410, S417, S424, S426, and S432 each carry phosphoserine. A Glycyl lysine isopeptide (Lys-Gly) (interchain with G-Cter in SUMO1); alternate cross-link involves residue K472. K472 participates in a covalent cross-link: Glycyl lysine isopeptide (Lys-Gly) (interchain with G-Cter in SUMO2); alternate. S475, S477, S478, and S482 each carry phosphoserine.

Belongs to the intermediate filament family. As to quaternary structure, heterotetramer of two type I and two type II keratins. Forms a heterodimer with KRT18. Associates with KRT20. Interacts with PNN. When associated with KRT19, interacts with DMD. Interacts with TCHP. Interacts with APEX1. Interacts with GPER1. Interacts with EPPK1. Interacts with PKP1 and PKP2. Post-translationally, O-glycosylated. O-GlcNAcylation at multiple sites increases solubility, and decreases stability by inducing proteasomal degradation. O-glycosylated (O-GlcNAcylated), in a cell cycle-dependent manner. As to expression, expressed in cardiac and striated muscle. Expressed at Z-lines within the muscle fibers and at Z-line and M-line domains at costameres at the sarcolemmal membrane (at protein level). Observed in coagulating gland, bladder, salivary gland, kidney, spleen, thymus, lung and heart. Also observed in ventral prostate, seminal vesicle and liver where expression increases following castration.

The protein localises to the cytoplasm. The protein resides in the nucleus. It localises to the nucleoplasm. It is found in the nucleus matrix. Together with KRT19, helps to link the contractile apparatus to dystrophin at the costameres of striated muscle. The chain is Keratin, type II cytoskeletal 8 (Krt8) from Rattus norvegicus (Rat).